Consider the following 101-residue polypeptide: Small ribosomal subunit protein uS14 (101 aa).

The protein belongs to the universal ribosomal protein uS14 family. Part of the 30S ribosomal subunit. Contacts proteins S3 and S10.

Functionally, binds 16S rRNA, required for the assembly of 30S particles and may also be responsible for determining the conformation of the 16S rRNA at the A site. This is Small ribosomal subunit protein uS14 from Shewanella sediminis (strain HAW-EB3).